The sequence spans 207 residues: Ribosomal RNA large subunit methyltransferase E (207 aa).

Residues Gly56, Trp58, Asp76, Asp94, and Asp116 each coordinate S-adenosyl-L-methionine. Lys156 (proton acceptor) is an active-site residue.

This sequence belongs to the class I-like SAM-binding methyltransferase superfamily. RNA methyltransferase RlmE family.

It is found in the cytoplasm. It carries out the reaction uridine(2552) in 23S rRNA + S-adenosyl-L-methionine = 2'-O-methyluridine(2552) in 23S rRNA + S-adenosyl-L-homocysteine + H(+). In terms of biological role, specifically methylates the uridine in position 2552 of 23S rRNA at the 2'-O position of the ribose in the fully assembled 50S ribosomal subunit. This chain is Ribosomal RNA large subunit methyltransferase E, found in Desulfatibacillum aliphaticivorans.